The sequence spans 287 residues: Succinate--CoA ligase [ADP-forming] subunit alpha 2 (287 aa).

Residues 17-20 (TGYQ), Lys-43, and 96-98 (ITE) contribute to the CoA site. Tyr-159 serves as a coordination point for substrate. Catalysis depends on His-246, which acts as the Tele-phosphohistidine intermediate.

Belongs to the succinate/malate CoA ligase alpha subunit family. In terms of assembly, heterotetramer of two alpha and two beta subunits.

It catalyses the reaction succinate + ATP + CoA = succinyl-CoA + ADP + phosphate. It carries out the reaction GTP + succinate + CoA = succinyl-CoA + GDP + phosphate. The protein operates within carbohydrate metabolism; tricarboxylic acid cycle; succinate from succinyl-CoA (ligase route): step 1/1. In terms of biological role, succinyl-CoA synthetase functions in the citric acid cycle (TCA), coupling the hydrolysis of succinyl-CoA to the synthesis of either ATP or GTP and thus represents the only step of substrate-level phosphorylation in the TCA. The alpha subunit of the enzyme binds the substrates coenzyme A and phosphate, while succinate binding and nucleotide specificity is provided by the beta subunit. In Archaeoglobus fulgidus (strain ATCC 49558 / DSM 4304 / JCM 9628 / NBRC 100126 / VC-16), this protein is Succinate--CoA ligase [ADP-forming] subunit alpha 2.